The chain runs to 95 residues: RING finger protein Z (95 aa).

Gly2 is lipidated: N-myristoyl glycine; by host. The segment at 38–74 adopts an RING-type; atypical zinc-finger fold; it reads CKSCWFANKGLIKCSNHYLCLKCLTAMLSRSDYCGIC. The PTAP/PSAP motif motif lies at 88 to 91; it reads PSAP.

Belongs to the arenaviridae Z protein family. In terms of assembly, interacts with protein NP; this interaction probably directs the encapsidated genome to budding sites. Interacts (via RING domain) with polymerase L; this interaction inhibits viral transcription and replication, Z partially blocks the product exit tunnel for the releasing nascent RNA product. Interacts with the glycoprotein complex; this interaction plays a role in virion budding. Interacts with host eIF4E; this interaction results in eIF4E reduced affinity for its substrate, the 5'-m7 G cap structure. Interacts (via late-budding domain) with host TSG101; this interaction is essential for budding and release of viral particles. Interacts with host RPLP0; this interaction may serve to load ribosome-like particles inside the virion. Interacts with host PML; this interaction induces PML bodies redistribution in the cytoplasm upon viral infection. In terms of processing, myristoylation is required for the role of RING finger protein Z in assembly and budding.

It localises to the virion. Its subcellular location is the host cytoplasm. The protein localises to the host perinuclear region. The protein resides in the host cell membrane. Plays a crucial role in virion assembly and budding. Expressed late in the virus life cycle, it acts as an inhibitor of viral transcription and RNA synthesis by interacting with the viral polymerase L. Presumably recruits the NP encapsidated genome to cellular membranes at budding sites via direct interaction with NP. Plays critical roles in the final steps of viral release by interacting with host TSG101, a member of the vacuolar protein-sorting pathway and using other cellular host proteins involved in vesicle formation pathway. The budding of the virus progeny occurs after association of protein Z with the viral glycoprotein complex SSP-GP1-GP2 at the cell periphery, step that requires myristoylation of protein Z. Also selectively represses protein production by associating with host eIF4E. In cell-based minigenome assay, has an inhibitory effect on the ribonucleoprotein machinery (vRNP), which is responsible for the replication and transcription of the viral genome. The sequence is that of RING finger protein Z from Bear Canyon mammarenavirus (isolate Mouse/United States/AV A0070039/2000) (BCNV).